The primary structure comprises 233 residues: Ribonuclease 3 (233 aa).

Positions 4 to 126 constitute an RNase III domain; that stretch reads LNKLMERLGH…IVGAIYIDAG (123 aa). Residue Glu-39 coordinates Mg(2+). Asp-43 is a catalytic residue. Residues Asp-112 and Glu-115 each contribute to the Mg(2+) site. The active site involves Glu-115. One can recognise a DRBM domain in the interval 153–222; the sequence is DAKSLLQEWL…AKRFLELLDD (70 aa).

Belongs to the ribonuclease III family. In terms of assembly, homodimer. Mg(2+) serves as cofactor.

It localises to the cytoplasm. The catalysed reaction is Endonucleolytic cleavage to 5'-phosphomonoester.. Digests double-stranded RNA. Involved in the processing of primary rRNA transcript to yield the immediate precursors to the large and small rRNAs (23S and 16S). Processes some mRNAs, and tRNAs when they are encoded in the rRNA operon. Processes pre-crRNA and tracrRNA of type II CRISPR loci if present in the organism. This chain is Ribonuclease 3, found in Coxiella burnetii (strain Dugway 5J108-111).